The sequence spans 421 residues: Serine--tRNA ligase (421 aa).

232-234 (TAE) lines the L-serine pocket. Position 262 to 264 (262 to 264 (RSE)) interacts with ATP. E285 contacts L-serine. 349-352 (EVSS) is a binding site for ATP. L-serine is bound at residue S384.

The protein belongs to the class-II aminoacyl-tRNA synthetase family. Type-1 seryl-tRNA synthetase subfamily. As to quaternary structure, homodimer. The tRNA molecule binds across the dimer.

The protein resides in the cytoplasm. The catalysed reaction is tRNA(Ser) + L-serine + ATP = L-seryl-tRNA(Ser) + AMP + diphosphate + H(+). The enzyme catalyses tRNA(Sec) + L-serine + ATP = L-seryl-tRNA(Sec) + AMP + diphosphate + H(+). The protein operates within aminoacyl-tRNA biosynthesis; selenocysteinyl-tRNA(Sec) biosynthesis; L-seryl-tRNA(Sec) from L-serine and tRNA(Sec): step 1/1. In terms of biological role, catalyzes the attachment of serine to tRNA(Ser). Is also able to aminoacylate tRNA(Sec) with serine, to form the misacylated tRNA L-seryl-tRNA(Sec), which will be further converted into selenocysteinyl-tRNA(Sec). The chain is Serine--tRNA ligase from Mycoplasma mobile (strain ATCC 43663 / 163K / NCTC 11711) (Mesomycoplasma mobile).